A 154-amino-acid polypeptide reads, in one-letter code: Ribonuclease H (154 aa).

Residues 1–142 form the RNase H type-1 domain; the sequence is MLKQITLYTD…CDELARNAAL (142 aa). Mg(2+)-binding residues include D10, E48, D70, and D134.

This sequence belongs to the RNase H family. Monomer. Mg(2+) is required as a cofactor.

It is found in the cytoplasm. It carries out the reaction Endonucleolytic cleavage to 5'-phosphomonoester.. Its function is as follows. Endonuclease that specifically degrades the RNA of RNA-DNA hybrids. In Tolumonas auensis (strain DSM 9187 / NBRC 110442 / TA 4), this protein is Ribonuclease H.